The chain runs to 153 residues: Superoxide dismutase [Cu-Zn] (153 aa).

Residues histidine 45, histidine 47, and histidine 62 each contribute to the Cu cation site. An intrachain disulfide couples cysteine 56 to cysteine 145. 4 residues coordinate Zn(2+): histidine 62, histidine 70, histidine 79, and aspartate 82. Position 119 (histidine 119) interacts with Cu cation.

Belongs to the Cu-Zn superoxide dismutase family. Homodimer. The cofactor is Cu cation. Requires Zn(2+) as cofactor.

The protein resides in the cytoplasm. The enzyme catalyses 2 superoxide + 2 H(+) = H2O2 + O2. In terms of biological role, destroys radicals which are normally produced within the cells and which are toxic to biological systems. In Ceratitis capitata (Mediterranean fruit fly), this protein is Superoxide dismutase [Cu-Zn].